The sequence spans 51 residues: MARNKPLAKKLRLAKAAKQNRRVPVWVIVKTNRKVMTHPKRRMWRRTKLKE.

Belongs to the eukaryotic ribosomal protein eL39 family.

The chain is Large ribosomal subunit protein eL39 from Thermococcus onnurineus (strain NA1).